Reading from the N-terminus, the 585-residue chain is NADP-reducing hydrogenase subunit HndD (585 aa).

The 2Fe-2S ferredoxin-type domain maps to 2–85 (SMLTITIDGK…NMVVKTNSLR (84 aa)). Residues Cys-36, Cys-52, Cys-55, and Cys-69 each coordinate [2Fe-2S] cluster. In terms of domain architecture, 4Fe-4S His(Cys)3-ligated-type spans 85-124 (RVLNARRTVLELLLSDHPKDCLVCAKSGECELQTLAERFG). The [4Fe-4S] cluster site is built by His-101, Cys-105, Cys-108, and Cys-114. 2 4Fe-4S ferredoxin-type domains span residues 144-174 (ASIIRDMDKCIMCRRCETMCNTVQTCGVLSG) and 185-216 (PAFEMNLADTVCTNCGQCVAVCPTGALVEHEY).

Heterotetramer composed of HndA, HndB, HndC and HndD subunits. HndD is probably the hydrogenase subunit. [4Fe-4S] cluster serves as cofactor.

It catalyses the reaction H2 + NADP(+) = NADPH + H(+). With respect to regulation, inhibited by oxygen. Catalyzes the reduction of NADP in the presence of molecular H(2) to yield NADPH. The chain is NADP-reducing hydrogenase subunit HndD (hndD) from Solidesulfovibrio fructosivorans (Desulfovibrio fructosivorans).